We begin with the raw amino-acid sequence, 317 residues long: Melanocyte-stimulating hormone receptor (317 aa).

The Extracellular portion of the chain corresponds to 1 to 37 (MPVQGSQRRLLGSLNSTPTATPHLGLAANQTGARCLE). The N-linked (GlcNAc...) asparagine glycan is linked to N29. A helical membrane pass occupies residues 38–63 (VSIPDGLFLSLGLVSLVENVLVVTAI). At 64–72 (AKNRNLHSP) the chain is on the cytoplasmic side. The chain crosses the membrane as a helical span at residues 73–93 (MYCFICCLALSDLLVSGSNML). Over 94 to 118 (ETAVILLLEAGALAARAAVVQQLDN) the chain is Extracellular. A helical transmembrane segment spans residues 119 to 140 (VIDVITCSSMLASLCFLGAIAV). Over 141–163 (DRYISIFYALRYHSIVTLPRARR) the chain is Cytoplasmic. Residues 164–183 (AVAAIWVASVLFSMLFIAYY) form a helical membrane-spanning segment. Residues 184-191 (DHAAVLLC) are Extracellular-facing. A helical transmembrane segment spans residues 192–211 (LVVFFLAMLVLMAVLYIHML). Residues 212–240 (ARARQHAQGIARLHKRQCPAHQGFGLKGA) are Cytoplasmic-facing. Residues 241-266 (ATLTILLGIFFLCWGPFFLHLTLIVL) form a helical membrane-spanning segment. Residues 267–279 (CPQHPTCSCIFKN) are Extracellular-facing. A helical membrane pass occupies residues 280–300 (FNLFLALIICNAIIDPLIYAF). At 301 to 317 (RSQELRRTLKEVLLCSW) the chain is on the cytoplasmic side. C315 is lipidated: S-palmitoyl cysteine.

Belongs to the G-protein coupled receptor 1 family. As to quaternary structure, interacts with MGRN1, but does not undergo MGRN1-mediated ubiquitination; this interaction competes with GNAS-binding and thus inhibits agonist-induced cAMP production. Interacts with OPN3; the interaction results in a decrease in MC1R-mediated cAMP signaling and ultimately a decrease in melanin production in melanocytes.

It localises to the cell membrane. Its function is as follows. Receptor for MSH (alpha, beta and gamma) and ACTH. The activity of this receptor is mediated by G proteins which activate adenylate cyclase. Mediates melanogenesis, the production of eumelanin (black/brown) and phaeomelanin (red/yellow), via regulation of cAMP signaling in melanocytes. The chain is Melanocyte-stimulating hormone receptor (MC1R) from Cercopithecus mitis (Blue monkey).